A 429-amino-acid chain; its full sequence is Glutamate-1-semialdehyde 2,1-aminomutase 2 (429 aa).

Lys-268 carries the N6-(pyridoxal phosphate)lysine modification.

This sequence belongs to the class-III pyridoxal-phosphate-dependent aminotransferase family. HemL subfamily. In terms of assembly, homodimer. It depends on pyridoxal 5'-phosphate as a cofactor.

Its subcellular location is the cytoplasm. It catalyses the reaction (S)-4-amino-5-oxopentanoate = 5-aminolevulinate. The protein operates within porphyrin-containing compound metabolism; protoporphyrin-IX biosynthesis; 5-aminolevulinate from L-glutamyl-tRNA(Glu): step 2/2. This chain is Glutamate-1-semialdehyde 2,1-aminomutase 2, found in Bacillus mycoides (strain KBAB4) (Bacillus weihenstephanensis).